A 422-amino-acid polypeptide reads, in one-letter code: UDP-N-acetylglucosamine 1-carboxyvinyltransferase (422 aa).

22–23 (KN) contributes to the phosphoenolpyruvate binding site. Position 93 (Arg-93) interacts with UDP-N-acetyl-alpha-D-glucosamine. Cys-117 functions as the Proton donor in the catalytic mechanism. The residue at position 117 (Cys-117) is a 2-(S-cysteinyl)pyruvic acid O-phosphothioketal. UDP-N-acetyl-alpha-D-glucosamine contacts are provided by residues 122–126 (RPVDL), Asp-308, and Ile-330.

Belongs to the EPSP synthase family. MurA subfamily.

It localises to the cytoplasm. It catalyses the reaction phosphoenolpyruvate + UDP-N-acetyl-alpha-D-glucosamine = UDP-N-acetyl-3-O-(1-carboxyvinyl)-alpha-D-glucosamine + phosphate. It functions in the pathway cell wall biogenesis; peptidoglycan biosynthesis. Its function is as follows. Cell wall formation. Adds enolpyruvyl to UDP-N-acetylglucosamine. This is UDP-N-acetylglucosamine 1-carboxyvinyltransferase from Legionella pneumophila (strain Paris).